A 655-amino-acid chain; its full sequence is Probable alpha-galactosidase D (655 aa).

Residues 1–16 (MASVIALSLLLPAAFA) form the signal peptide. N87 and N93 each carry an N-linked (GlcNAc...) asparagine glycan. An intrachain disulfide couples C126 to C153. D151 serves as the catalytic Nucleophile. 196–200 (EWGID) serves as a coordination point for substrate. D218 functions as the Proton donor in the catalytic mechanism. Residues N432, N482, N502, N540, and N579 are each glycosylated (N-linked (GlcNAc...) asparagine).

It belongs to the glycosyl hydrolase 27 family.

Its subcellular location is the secreted. The catalysed reaction is Hydrolysis of terminal, non-reducing alpha-D-galactose residues in alpha-D-galactosides, including galactose oligosaccharides, galactomannans and galactolipids.. Its function is as follows. Hydrolyzes a variety of simple alpha-D-galactoside as well as more complex molecules such as oligosaccharides and polysaccharides. The sequence is that of Probable alpha-galactosidase D (aglD) from Aspergillus terreus (strain NIH 2624 / FGSC A1156).